Consider the following 205-residue polypeptide: Imidazole glycerol phosphate synthase subunit HisH (205 aa).

One can recognise a Glutamine amidotransferase type-1 domain in the interval 3-205 (RIALLDYGMG…LLKNFVEWNI (203 aa)). Catalysis depends on C80, which acts as the Nucleophile. Residues H185 and E187 contribute to the active site.

As to quaternary structure, heterodimer of HisH and HisF.

The protein resides in the cytoplasm. It carries out the reaction 5-[(5-phospho-1-deoxy-D-ribulos-1-ylimino)methylamino]-1-(5-phospho-beta-D-ribosyl)imidazole-4-carboxamide + L-glutamine = D-erythro-1-(imidazol-4-yl)glycerol 3-phosphate + 5-amino-1-(5-phospho-beta-D-ribosyl)imidazole-4-carboxamide + L-glutamate + H(+). It catalyses the reaction L-glutamine + H2O = L-glutamate + NH4(+). Its pathway is amino-acid biosynthesis; L-histidine biosynthesis; L-histidine from 5-phospho-alpha-D-ribose 1-diphosphate: step 5/9. In terms of biological role, IGPS catalyzes the conversion of PRFAR and glutamine to IGP, AICAR and glutamate. The HisH subunit catalyzes the hydrolysis of glutamine to glutamate and ammonia as part of the synthesis of IGP and AICAR. The resulting ammonia molecule is channeled to the active site of HisF. This chain is Imidazole glycerol phosphate synthase subunit HisH, found in Acinetobacter baylyi (strain ATCC 33305 / BD413 / ADP1).